The primary structure comprises 215 residues: ATP-dependent Clp protease proteolytic subunit 1 (215 aa).

Serine 111 serves as the catalytic Nucleophile. The active site involves histidine 136.

The protein belongs to the peptidase S14 family. As to quaternary structure, fourteen ClpP subunits assemble into 2 heptameric rings which stack back to back to give a disk-like structure with a central cavity, resembling the structure of eukaryotic proteasomes.

The protein resides in the cytoplasm. It catalyses the reaction Hydrolysis of proteins to small peptides in the presence of ATP and magnesium. alpha-casein is the usual test substrate. In the absence of ATP, only oligopeptides shorter than five residues are hydrolyzed (such as succinyl-Leu-Tyr-|-NHMec, and Leu-Tyr-Leu-|-Tyr-Trp, in which cleavage of the -Tyr-|-Leu- and -Tyr-|-Trp bonds also occurs).. In terms of biological role, cleaves peptides in various proteins in a process that requires ATP hydrolysis. Has a chymotrypsin-like activity. Plays a major role in the degradation of misfolded proteins. The protein is ATP-dependent Clp protease proteolytic subunit 1 of Gluconobacter oxydans (strain 621H) (Gluconobacter suboxydans).